Here is a 467-residue protein sequence, read N- to C-terminus: tRNA-2-methylthio-N(6)-dimethylallyladenosine synthase (467 aa).

An MTTase N-terminal domain is found at 4 to 124 (RKLFIKSYGC…LPEMVAKVER (121 aa)). Cysteine 13, cysteine 49, cysteine 87, cysteine 161, cysteine 165, and cysteine 168 together coordinate [4Fe-4S] cluster. The Radical SAM core domain maps to 147 to 379 (QAHGPSAFLS…QARLVEIQQA (233 aa)). The TRAM domain maps to 382–444 (QACVGRPMDV…SNSLAARLVE (63 aa)).

The protein belongs to the methylthiotransferase family. MiaB subfamily. In terms of assembly, monomer. The cofactor is [4Fe-4S] cluster.

The protein resides in the cytoplasm. The enzyme catalyses N(6)-dimethylallyladenosine(37) in tRNA + (sulfur carrier)-SH + AH2 + 2 S-adenosyl-L-methionine = 2-methylsulfanyl-N(6)-dimethylallyladenosine(37) in tRNA + (sulfur carrier)-H + 5'-deoxyadenosine + L-methionine + A + S-adenosyl-L-homocysteine + 2 H(+). Its function is as follows. Catalyzes the methylthiolation of N6-(dimethylallyl)adenosine (i(6)A), leading to the formation of 2-methylthio-N6-(dimethylallyl)adenosine (ms(2)i(6)A) at position 37 in tRNAs that read codons beginning with uridine. This chain is tRNA-2-methylthio-N(6)-dimethylallyladenosine synthase, found in Rhodospirillum rubrum (strain ATCC 11170 / ATH 1.1.1 / DSM 467 / LMG 4362 / NCIMB 8255 / S1).